Reading from the N-terminus, the 347-residue chain is Globoside alpha-1,3-N-acetylgalactosaminyltransferase 1 (347 aa).

The Cytoplasmic segment spans residues 1 to 5; sequence MHRRR. A helical; Signal-anchor for type II membrane protein membrane pass occupies residues 6-26; sequence LALGLGFCLLAGTSLSVLWVY. The Lumenal segment spans residues 27–347; sequence LENWLPVSYV…LDKDISCLRS (321 aa). Asn-108 carries N-linked (GlcNAc...) asparagine glycosylation. Substrate contacts are provided by residues 116 to 121, 206 to 208, and 228 to 231; these read FAVGKY, DVD, and HPSY. Residues Asp-206 and Asp-208 each contribute to the Mn(2+) site. The Nucleophile role is filled by Glu-298.

Belongs to the glycosyltransferase 6 family. Mn(2+) serves as cofactor. As to expression, widely expressed. Expressed at higher level in placenta, ovary and peripheral blood leukocyte, whereas it is weakly expressed in liver, thymus, and testis. Expressed in bone marrow erythroid cells.

Its subcellular location is the golgi apparatus membrane. Its pathway is protein modification; protein glycosylation. Its function is as follows. Has lost the ability to synthesize Forssman glycolipid antigen (FORS1/FG). Might have acquired an alternative function in glycosphingolipid metabolism, but it remains to be established. It appears to have drifted more slowly than confirmed pseudogenes in the glycosyltransferase 6 family, suggesting that it has remained under evolutionary pressure. In Homo sapiens (Human), this protein is Globoside alpha-1,3-N-acetylgalactosaminyltransferase 1.